Reading from the N-terminus, the 570-residue chain is Sulfite reductase [NADPH] hemoprotein beta-component (570 aa).

The [4Fe-4S] cluster site is built by C434, C440, C479, and C483. C483 serves as a coordination point for siroheme.

Belongs to the nitrite and sulfite reductase 4Fe-4S domain family. As to quaternary structure, alpha(8)-beta(8). The alpha component is a flavoprotein, the beta component is a hemoprotein. Requires siroheme as cofactor. [4Fe-4S] cluster is required as a cofactor.

It carries out the reaction hydrogen sulfide + 3 NADP(+) + 3 H2O = sulfite + 3 NADPH + 4 H(+). Its pathway is sulfur metabolism; hydrogen sulfide biosynthesis; hydrogen sulfide from sulfite (NADPH route): step 1/1. Its function is as follows. Component of the sulfite reductase complex that catalyzes the 6-electron reduction of sulfite to sulfide. This is one of several activities required for the biosynthesis of L-cysteine from sulfate. This Shigella flexneri serotype 5b (strain 8401) protein is Sulfite reductase [NADPH] hemoprotein beta-component.